Here is a 213-residue protein sequence, read N- to C-terminus: Kynurenine formamidase (213 aa).

W18 provides a ligand contact to substrate. The Zn(2+) site is built by H48, H52, and D54. H58 (proton donor/acceptor) is an active-site residue. The Zn(2+) site is built by H160 and E172.

Belongs to the Cyclase 1 superfamily. KynB family. Homodimer. It depends on Zn(2+) as a cofactor.

It catalyses the reaction N-formyl-L-kynurenine + H2O = L-kynurenine + formate + H(+). It participates in amino-acid degradation; L-tryptophan degradation via kynurenine pathway; L-kynurenine from L-tryptophan: step 2/2. Its function is as follows. Catalyzes the hydrolysis of N-formyl-L-kynurenine to L-kynurenine, the second step in the kynurenine pathway of tryptophan degradation. This Burkholderia vietnamiensis (strain G4 / LMG 22486) (Burkholderia cepacia (strain R1808)) protein is Kynurenine formamidase.